A 485-amino-acid chain; its full sequence is Glutamate--tRNA ligase (485 aa).

The 'HIGH' region motif lies at 11 to 21 (PSPTGLLHIGN). The short motif at 255–259 (KLSKR) is the 'KMSKS' region element. K258 provides a ligand contact to ATP.

The protein belongs to the class-I aminoacyl-tRNA synthetase family. Glutamate--tRNA ligase type 1 subfamily. Monomer.

It localises to the cytoplasm. The enzyme catalyses tRNA(Glu) + L-glutamate + ATP = L-glutamyl-tRNA(Glu) + AMP + diphosphate. Functionally, catalyzes the attachment of glutamate to tRNA(Glu) in a two-step reaction: glutamate is first activated by ATP to form Glu-AMP and then transferred to the acceptor end of tRNA(Glu). The sequence is that of Glutamate--tRNA ligase from Streptococcus mutans serotype c (strain ATCC 700610 / UA159).